A 201-amino-acid polypeptide reads, in one-letter code: Holliday junction branch migration complex subunit RuvA (201 aa).

The interval 1-63 (MIEFVRGYVD…EDTLALYGFR (63 aa)) is domain I. Positions 64–142 (TREERTLFAK…AVTAKTFPDL (79 aa)) are domain II. A flexible linker region spans residues 143–153 (FHLQEESARPH). The tract at residues 153-201 (HLSALEEAIEALKALGYAEREIQKVVPSLMKENLSTDQYVKRALQQLLK) is domain III.

Belongs to the RuvA family. Homotetramer. Forms an RuvA(8)-RuvB(12)-Holliday junction (HJ) complex. HJ DNA is sandwiched between 2 RuvA tetramers; dsDNA enters through RuvA and exits via RuvB. An RuvB hexamer assembles on each DNA strand where it exits the tetramer. Each RuvB hexamer is contacted by two RuvA subunits (via domain III) on 2 adjacent RuvB subunits; this complex drives branch migration. In the full resolvosome a probable DNA-RuvA(4)-RuvB(12)-RuvC(2) complex forms which resolves the HJ.

Its subcellular location is the cytoplasm. Its function is as follows. The RuvA-RuvB-RuvC complex processes Holliday junction (HJ) DNA during genetic recombination and DNA repair, while the RuvA-RuvB complex plays an important role in the rescue of blocked DNA replication forks via replication fork reversal (RFR). RuvA specifically binds to HJ cruciform DNA, conferring on it an open structure. The RuvB hexamer acts as an ATP-dependent pump, pulling dsDNA into and through the RuvAB complex. HJ branch migration allows RuvC to scan DNA until it finds its consensus sequence, where it cleaves and resolves the cruciform DNA. This Geobacillus sp. (strain WCH70) protein is Holliday junction branch migration complex subunit RuvA.